A 265-amino-acid chain; its full sequence is Hydroxyethylthiazole kinase (265 aa).

A substrate-binding site is contributed by Met-55. ATP contacts are provided by Arg-130 and Ser-176. Gly-203 provides a ligand contact to substrate.

It belongs to the Thz kinase family. Mg(2+) serves as cofactor.

The catalysed reaction is 5-(2-hydroxyethyl)-4-methylthiazole + ATP = 4-methyl-5-(2-phosphooxyethyl)-thiazole + ADP + H(+). Its pathway is cofactor biosynthesis; thiamine diphosphate biosynthesis; 4-methyl-5-(2-phosphoethyl)-thiazole from 5-(2-hydroxyethyl)-4-methylthiazole: step 1/1. Functionally, catalyzes the phosphorylation of the hydroxyl group of 4-methyl-5-beta-hydroxyethylthiazole (THZ). This is Hydroxyethylthiazole kinase from Leptospira interrogans serogroup Icterohaemorrhagiae serovar copenhageni (strain Fiocruz L1-130).